A 632-amino-acid chain; its full sequence is Maltase 1 (632 aa).

Over residues Met1–Asp29 the composition is skewed to basic and acidic residues. Residues Met1 to Ser30 form a disordered region. N-linked (GlcNAc...) asparagine glycosylation is found at Asn179 and Asn212. Asp280 acts as the Nucleophile in catalysis. N-linked (GlcNAc...) asparagine glycosylation is present at Asn333. Catalysis depends on Glu348, which acts as the Proton donor. Asn461, Asn575, and Asn578 each carry an N-linked (GlcNAc...) asparagine glycan.

It belongs to the glycosyl hydrolase 13 family.

The enzyme catalyses Hydrolysis of terminal, non-reducing (1-&gt;4)-linked alpha-D-glucose residues with release of alpha-D-glucose.. In Drosophila virilis (Fruit fly), this protein is Maltase 1 (Mal-B1).